Here is a 443-residue protein sequence, read N- to C-terminus: D-inositol 3-phosphate glycosyltransferase (443 aa).

Residue His26 coordinates 1D-myo-inositol 3-phosphate. Residues 32 to 33 (QP) and Gly40 contribute to the UDP-N-acetyl-alpha-D-glucosamine site. 1D-myo-inositol 3-phosphate is bound by residues 37 to 42 (DAGGMN), Lys95, Tyr128, Thr152, and Arg172. The UDP-N-acetyl-alpha-D-glucosamine site is built by Arg246, Lys251, and Gln304. Mg(2+) contacts are provided by Tyr313, Arg314, and Ala316. Glu326 and Glu334 together coordinate UDP-N-acetyl-alpha-D-glucosamine. Thr340 is a Mg(2+) binding site.

This sequence belongs to the glycosyltransferase group 1 family. MshA subfamily. Homodimer.

The enzyme catalyses 1D-myo-inositol 3-phosphate + UDP-N-acetyl-alpha-D-glucosamine = 1D-myo-inositol 2-acetamido-2-deoxy-alpha-D-glucopyranoside 3-phosphate + UDP + H(+). In terms of biological role, catalyzes the transfer of a N-acetyl-glucosamine moiety to 1D-myo-inositol 3-phosphate to produce 1D-myo-inositol 2-acetamido-2-deoxy-glucopyranoside 3-phosphate in the mycothiol biosynthesis pathway. The chain is D-inositol 3-phosphate glycosyltransferase from Mycobacteroides abscessus (strain ATCC 19977 / DSM 44196 / CCUG 20993 / CIP 104536 / JCM 13569 / NCTC 13031 / TMC 1543 / L948) (Mycobacterium abscessus).